The following is a 580-amino-acid chain: Long-chain-fatty-acid--AMP ligase FadD28 (580 aa).

A disordered region spans residues Ser-421 to Pro-440.

This sequence belongs to the ATP-dependent AMP-binding enzyme family.

It carries out the reaction holo-[mycocerosate synthase] + a long-chain fatty acid + ATP = a long-chain fatty acyl-[mycocerosate synthase] + AMP + diphosphate. The enzyme catalyses a long-chain fatty acid + ATP + H(+) = a long-chain fatty acyl-AMP + diphosphate. It catalyses the reaction holo-[mycocerosate synthase] + a long-chain fatty acyl-AMP = a long-chain fatty acyl-[mycocerosate synthase] + AMP + H(+). Its pathway is lipid metabolism; fatty acid biosynthesis. Functionally, involved in the biosynthesis of phthiocerol dimycocerosate (PDIM), a cell wall-associated lipid found only in pathogenic mycobacteria. Catalyzes the activation of long-chain fatty acids as acyl-adenylates (acyl-AMP), which are then transferred to the multifunctional polyketide synthase Mas for further chain extension. The protein is Long-chain-fatty-acid--AMP ligase FadD28 (fadD28) of Mycobacterium tuberculosis (strain CDC 1551 / Oshkosh).